Consider the following 366-residue polypeptide: Ubiquitin carboxyl-terminal hydrolase 46 (366 aa).

Residues 35–365 (FGLVNFGNTC…SGYILFYQSR (331 aa)) enclose the USP domain. The active-site Nucleophile is the Cys-44. Positions 182, 185, 229, and 232 each coordinate Zn(2+). Residue His-313 is the Proton acceptor of the active site.

The protein belongs to the peptidase C19 family. USP12/USP46 subfamily. As to quaternary structure, interacts with WDR48. Interacts with WDR20. Interacts with DMWD. Component of the USP46/WDR20/WDR48 deubiquitinating complex. As to expression, broadly expressed.

The protein localises to the cytoplasm. The enzyme catalyses Thiol-dependent hydrolysis of ester, thioester, amide, peptide and isopeptide bonds formed by the C-terminal Gly of ubiquitin (a 76-residue protein attached to proteins as an intracellular targeting signal).. With respect to regulation, activated by interaction with WDR48. Its function is as follows. Deubiquitinating enzyme that plays a role in behavior, possibly by regulating GABA action. May act by mediating the deubiquitination of GAD1/GAD67. Has almost no deubiquitinating activity by itself and requires the interaction with WDR48 to have a high activity. Not involved in deubiquitination of monoubiquitinated FANCD2. This is Ubiquitin carboxyl-terminal hydrolase 46 (USP46) from Homo sapiens (Human).